Here is a 478-residue protein sequence, read N- to C-terminus: MQVQPTKYVGLVADLMPNIRLMQASGHFLFRYVTGPILIRKVYSWWTLAMVLIQFFAILGNLATNADDVNELTANTITTLFFTHSVTKFIYFAVNSENFYRTLAIWNQTNTHPLFAESDARYHSIALAKMRKLLVLVMATTVLSVVAWVTITFFGESVKTVLDKATNETYTVDIPRLPIKSWYPWNAMSGPAYIFSFIYQIYFLLFSMVQSNLADVMFCSWLLLACEQLQHLKGIMRSLMELSASLDTYRPNSSQLFRAISAGSKSELIINEEKDPDVKDFDLSGIYSSKADWGAQFRAPSTLQTFDENGRNGNPNGLTRKQEMMVRSAIKYWVERHKHVVRLVSAIGDTYGPALLLHMLTSTIKLTLLAYQATKIDGVNVYGLTVIGYLCYALAQVFLFCIFGNRLIEESSSVMEAAYSCHWYDGSEEAKTFVQIVCQQCQKAMTISGAKFFTVSLDLFASVLGAVVTYFMVLVQLK.

Residues 1-41 (MQVQPTKYVGLVADLMPNIRLMQASGHFLFRYVTGPILIRK) are Cytoplasmic-facing. The chain crosses the membrane as a helical span at residues 42 to 62 (VYSWWTLAMVLIQFFAILGNL). The Extracellular portion of the chain corresponds to 63–73 (ATNADDVNELT). A helical membrane pass occupies residues 74 to 94 (ANTITTLFFTHSVTKFIYFAV). At 95 to 133 (NSENFYRTLAIWNQTNTHPLFAESDARYHSIALAKMRKL) the chain is on the cytoplasmic side. Residues 134 to 154 (LVLVMATTVLSVVAWVTITFF) form a helical membrane-spanning segment. The Extracellular segment spans residues 155–188 (GESVKTVLDKATNETYTVDIPRLPIKSWYPWNAM). Residue Asn-167 is glycosylated (N-linked (GlcNAc...) asparagine). The chain crosses the membrane as a helical span at residues 189-209 (SGPAYIFSFIYQIYFLLFSMV). Residues 210–338 (QSNLADVMFC…AIKYWVERHK (129 aa)) lie on the Cytoplasmic side of the membrane. Residues 339-361 (HVVRLVSAIGDTYGPALLLHMLT) form a helical membrane-spanning segment. The Extracellular portion of the chain corresponds to 362–382 (STIKLTLLAYQATKIDGVNVY). A helical membrane pass occupies residues 383–403 (GLTVIGYLCYALAQVFLFCIF). Over 404 to 454 (GNRLIEESSSVMEAAYSCHWYDGSEEAKTFVQIVCQQCQKAMTISGAKFFT) the chain is Cytoplasmic. A helical transmembrane segment spans residues 455-475 (VSLDLFASVLGAVVTYFMVLV). Residues 476-478 (QLK) lie on the Extracellular side of the membrane.

This sequence belongs to the insect chemoreceptor superfamily. Heteromeric odorant receptor channel (TC 1.A.69) family. Orco subfamily. As to quaternary structure, heterodimer with conventional odorant receptors (ORs). Complexes exist early in the endomembrane system in olfactory sensory neurons (OSNs), coupling these complexes to the conserved ciliary trafficking pathway. As to expression, expressed in olfactory and gustatory organs of both adult and immature stages. Highest expression is seen in adult antennae and the maxillary palps. Lower expression also seen in proboscis and legs. Within the antenna, expression originates in cell bodies and projects into the lumen of an individual sensillum, presumably along the dendritic extension of the neuron. Within the maxillary palps, expression is seen in a small number of cell bodies and in projections into the sensillar cone. Within the probiscus, expression is seen in a single type of sensillum on the outer surface of the labellar lobes.

The protein resides in the cell membrane. Its function is as follows. Odorant coreceptor which complexes with conventional odorant receptors (ORs) to form odorant-sensing units, providing sensitive and prolonged odorant signaling and calcium permeability. Orco is a universal and integral part of the functional odorant receptor, involved in the dendritic localization of other olfactory receptors. Can form functional ion channels in the absence of an odor-binding OR. Plays a key role in preferred attraction of females for humans over non-human hosts for blood feeding. Human attraction plays a crucial role in the transmission of Plasmodium protozoans by the mosquito leading to infection diseases like malaria. Also required for the response to N,N-Diethyl-meta-toluamide (DEET), the most widely used insect repellent worldwide. The chain is Odorant receptor coreceptor (Orco) from Anopheles gambiae (African malaria mosquito).